The primary structure comprises 294 residues: Ribosomal RNA small subunit methyltransferase A (294 aa).

Asn-29, Val-31, Gly-56, Glu-77, Asp-107, and Asn-126 together coordinate S-adenosyl-L-methionine.

It belongs to the class I-like SAM-binding methyltransferase superfamily. rRNA adenine N(6)-methyltransferase family. RsmA subfamily.

It localises to the cytoplasm. The enzyme catalyses adenosine(1518)/adenosine(1519) in 16S rRNA + 4 S-adenosyl-L-methionine = N(6)-dimethyladenosine(1518)/N(6)-dimethyladenosine(1519) in 16S rRNA + 4 S-adenosyl-L-homocysteine + 4 H(+). Its function is as follows. Specifically dimethylates two adjacent adenosines (A1518 and A1519) in the loop of a conserved hairpin near the 3'-end of 16S rRNA in the 30S particle. May play a critical role in biogenesis of 30S subunits. In Mycobacterium sp. (strain JLS), this protein is Ribosomal RNA small subunit methyltransferase A.